A 356-amino-acid chain; its full sequence is Ubiquitin-conjugating enzyme E2 variant 3 (356 aa).

A disordered region spans residues 1-83 (MSDQPGTSRP…LEDLHNYHRE (83 aa)). Residues 18–32 (PTKTATRRRARPIAI) show a composition bias toward polar residues. Residues 63 to 76 (QPRKTVPKNVPLED) show a composition bias toward basic and acidic residues. The UBC core domain maps to 169-324 (DIITEFMNRS…AREFVMKMAG (156 aa)).

Belongs to the ubiquitin-conjugating enzyme family. As to quaternary structure, may interact with pmk-3. In terms of tissue distribution, expressed ubiquitously.

It is found in the nucleus. Its subcellular location is the cytoplasm. The protein localises to the cell projection. It localises to the dendrite. The protein resides in the axon. It is found in the cilium. In terms of biological role, possible negative regulator of polyubiquitination. May modulate the activity of the p38 MAP kinase pnk-3. May have a role in axon termination and synaptic transmission at motor and mechanosensory neurons. Plays a role in intraflagellar transport in cilia and cilium length regulation. The sequence is that of Ubiquitin-conjugating enzyme E2 variant 3 from Caenorhabditis elegans.